Reading from the N-terminus, the 360-residue chain is Protein MGF 360-2L (360 aa).

This sequence belongs to the asfivirus MGF 360 family.

In terms of biological role, plays a role in virus cell tropism, and may be required for efficient virus replication in macrophages. The chain is Protein MGF 360-2L from Ornithodoros (relapsing fever ticks).